A 1048-amino-acid chain; its full sequence is 3-hydroxy-3-methylglutaryl-coenzyme A reductase (1048 aa).

The Cytoplasmic portion of the chain corresponds to 1-32 (MDPVVKKPSPGGVQHRVTKGLRAIVGHACRHP). A helical membrane pass occupies residues 33–53 (IHTLLVTALTAATTHLHVLEG). At 54-220 (TYQAAHRGLA…FLHRVKHAET (167 aa)) the chain is on the lumenal side. Residues 221–241 (VDLVIIGLSYLAMNMTVVSLF) form a helical membrane-spanning segment. The region spanning 222 to 403 (DLVIIGLSYL…FTFYATILCV (182 aa)) is the SSD domain. Over 242-250 (RVMRQLGSR) the chain is Cytoplasmic. The helical transmembrane segment at 251–271 (FWLATSVLLSGAFAFVLGLGI) threads the bilayer. Topologically, residues 272–276 (TTTCD) are lumenal. A helical transmembrane segment spans residues 277 to 297 (VPVDMLLLFEGIPYLVLTVGF). Topologically, residues 298–348 (EKPIQLTRAVLCVSEELRGGWQRPVPNGASSDDSRQSQLIPNIIQLAVDRE) are cytoplasmic. The chain crosses the membrane as a helical span at residues 349–369 (GWYIVRSYLLEIGALALGAVL). Residues 370-377 (RPNDSLGH) are Lumenal-facing. N-linked (GlcNAc...) asparagine glycosylation is present at Asn372. Residues 378 to 398 (FCFLAAWTLLIDAILLFTFYA) form a helical membrane-spanning segment. Over 399–439 (TILCVKLEITRIRSPGGLGQVNAKHPSGIFGHKVKSTNITW) the chain is Cytoplasmic. A helical transmembrane segment spans residues 440–460 (WKLLTVGGFVLCHFLQLSPFF). The Lumenal segment spans residues 461–542 (YRVMGEYMAN…LDGLESPLGR (82 aa)). 2 N-linked (GlcNAc...) asparagine glycosylation sites follow: Asn470 and Asn520. A helical transmembrane segment spans residues 543-563 (LCLMGALVVSLVLNNHLIHAA). The Cytoplasmic segment spans residues 564-1048 (RWHAWPQARE…NRSAGATVKK (485 aa)). Glu729 acts as the Charge relay system in catalysis. Position 735–741 (735–741 (SASRGCK)) interacts with CoA. Residues 796-798 (SRF) and 823-831 (DAMGMNMIS) each bind NADP(+). Lys863 acts as the Charge relay system in catalysis. 892 to 894 (VLK) provides a ligand contact to CoA. Asp939 (charge relay system) is an active-site residue. 1034–1035 (AH) provides a ligand contact to CoA. Catalysis depends on His1035, which acts as the Proton donor. 1039 to 1040 (NR) is an NADP(+) binding site.

Belongs to the HMG-CoA reductase family.

Its subcellular location is the endoplasmic reticulum membrane. It catalyses the reaction (R)-mevalonate + 2 NADP(+) + CoA = (3S)-3-hydroxy-3-methylglutaryl-CoA + 2 NADPH + 2 H(+). Its pathway is metabolic intermediate biosynthesis; (R)-mevalonate biosynthesis; (R)-mevalonate from acetyl-CoA: step 3/3. Its function is as follows. HMG-CoA reductase; part of the first module of ergosterol biosynthesis pathway that includes the early steps of the pathway, conserved across all eukaryotes, and which results in the formation of mevalonate from acetyl-coenzyme A (acetyl-CoA). In this module, the cytosolic acetyl-CoA acetyltransferase catalyzes the formation of acetoacetyl-CoA. The hydroxymethylglutaryl-CoA synthase then condenses acetyl-CoA with acetoacetyl-CoA to form HMG-CoA. The rate-limiting step of the early module is the reduction to mevalonate by the 3-hydroxy-3-methylglutaryl-coenzyme A (HMG-CoA) reductase. The protein is 3-hydroxy-3-methylglutaryl-coenzyme A reductase of Aspergillus terreus (strain NIH 2624 / FGSC A1156).